The sequence spans 720 residues: Engulfment and cell motility protein 3 (720 aa).

The region spanning 307-479 (EQREQLQALR…VVREQLARTL (173 aa)) is the ELMO domain. The PH domain maps to 541–663 (LRLCEGMLFR…WTDGLSALLG (123 aa)).

In terms of assembly, probably interacts directly with the SH3-domain of DOCK1 via its SH3-binding site. Part of a complex with DOCK1 and RAC1. Interacts with ADGRB3.

Its subcellular location is the cytoplasm. Its function is as follows. Involved in cytoskeletal rearrangements required for phagocytosis of apoptotic cells and cell motility. Acts in association with DOCK1 and CRK. Was initially proposed to be required in complex with DOCK1 to activate Rac Rho small GTPases. May enhance the guanine nucleotide exchange factor (GEF) activity of DOCK1. The sequence is that of Engulfment and cell motility protein 3 (Elmo3) from Rattus norvegicus (Rat).